The following is a 48-amino-acid chain: Protein TUNAR (48 aa).

The segment at 1 to 20 is disordered; that stretch reads MVITSENDEDRGGQEKESKE. A compositionally biased stretch (basic and acidic residues) spans 10-20; that stretch reads DRGGQEKESKE. Residues 24–44 form a helical membrane-spanning segment; the sequence is LAMLGIIGTILNLIVIIFVYI.

In terms of assembly, interacts with ATPase ATP2A2/SERCA2. Interacts with ATPase ATP2A3/SERCA3; the interaction occurs at low levels in low glucose conditions and is increased by high glucose levels. In terms of tissue distribution, highly expressed in pancreatic islets where it is enriched in the insulin-producing beta cells.

The protein localises to the endoplasmic reticulum membrane. It localises to the extracellular vesicle membrane. Its function is as follows. In neurons, plays a role in the regulation of intracellular Ca(2+), possibly by acting as an activator of ATP2A2/SERCA2, thus increasing the efficiency with which Ca(2+) is removed from the cytoplasm. Inhibits differentiation of embryonic stem cells into neurons and inhibits neurite outgrowth, likely as a result of its role in intracellular Ca(2+) regulation. In pancreatic beta cells, lowers Ca(2+) levels in the endoplasmic reticulum and enhances glucose-stimulated insulin secretion. This Homo sapiens (Human) protein is Protein TUNAR.